Reading from the N-terminus, the 885-residue chain is Leucine--tRNA ligase (885 aa).

Positions 48–58 (PYPSGKLHMGH) match the 'HIGH' region motif. Positions 639–643 (TMSKS) match the 'KMSKS' region motif. ATP is bound at residue Lys-642.

The protein belongs to the class-I aminoacyl-tRNA synthetase family.

It localises to the cytoplasm. It carries out the reaction tRNA(Leu) + L-leucine + ATP = L-leucyl-tRNA(Leu) + AMP + diphosphate. This is Leucine--tRNA ligase from Bordetella bronchiseptica (strain ATCC BAA-588 / NCTC 13252 / RB50) (Alcaligenes bronchisepticus).